The primary structure comprises 188 residues: MGSLKLSTVVVTALVVCLSILLISPTEAVEGKLKEECENVPYGFCPFWLFNPRSEELCKEKCKRFKSETSEYYGGFCTPNGPPGGVSLTATCNCCVREKVSPPEIEAVEGKLEVCDNLQIGMCLWYLWPWYDSTKRCEETCQKQNNSPSGARYRYYGGFCTPIVRGTGFFIHGACNCCIRDIKKQASS.

Residues 1 to 28 (MGSLKLSTVVVTALVVCLSILLISPTEA) form the signal peptide. 7 disulfide bridges follow: Cys-37–Cys-95, Cys-45–Cys-77, Cys-58–Cys-92, Cys-62–Cys-94, Cys-123–Cys-178, Cys-137–Cys-175, and Cys-141–Cys-177.

Belongs to the DEFL family.

It is found in the secreted. This is Defensin-like protein 99 from Arabidopsis thaliana (Mouse-ear cress).